The sequence spans 1054 residues: DNA-directed RNA polymerase subunit beta' (1054 aa).

Residues aspartate 383, aspartate 385, and aspartate 387 each contribute to the Mg(2+) site. The Zn(2+) site is built by cysteine 752, cysteine 826, cysteine 833, and cysteine 836.

It belongs to the RNA polymerase beta' chain family. The RNAP catalytic core consists of 2 alpha, 1 beta, 1 beta' and 1 omega subunit. When a sigma factor is associated with the core the holoenzyme is formed, which can initiate transcription. Requires Mg(2+) as cofactor. Zn(2+) serves as cofactor.

It catalyses the reaction RNA(n) + a ribonucleoside 5'-triphosphate = RNA(n+1) + diphosphate. Functionally, DNA-dependent RNA polymerase catalyzes the transcription of DNA into RNA using the four ribonucleoside triphosphates as substrates. This is DNA-directed RNA polymerase subunit beta' from Weissella paramesenteroides (Leuconostoc paramesenteroides).